The primary structure comprises 314 residues: Ribosomal RNA small subunit methyltransferase H (314 aa).

S-adenosyl-L-methionine is bound by residues 31 to 33, D49, F76, D118, and Q125; that span reads GGY.

It belongs to the methyltransferase superfamily. RsmH family.

Its subcellular location is the cytoplasm. It carries out the reaction cytidine(1402) in 16S rRNA + S-adenosyl-L-methionine = N(4)-methylcytidine(1402) in 16S rRNA + S-adenosyl-L-homocysteine + H(+). In terms of biological role, specifically methylates the N4 position of cytidine in position 1402 (C1402) of 16S rRNA. This Wolbachia pipientis wMel protein is Ribosomal RNA small subunit methyltransferase H.